The chain runs to 267 residues: Serine acetyltransferase (267 aa).

Belongs to the transferase hexapeptide repeat family.

The protein localises to the cytoplasm. The catalysed reaction is L-serine + acetyl-CoA = O-acetyl-L-serine + CoA. The protein operates within amino-acid biosynthesis; L-cysteine biosynthesis; L-cysteine from L-serine: step 1/2. The protein is Serine acetyltransferase (cysE) of Haemophilus influenzae (strain ATCC 51907 / DSM 11121 / KW20 / Rd).